The following is a 298-amino-acid chain: uncharacterized protein (298 aa).

A run of 8 helical transmembrane segments spans residues 5-25 (SLAT…FLLW), 52-72 (VISG…FLAL), 105-125 (LFLL…QVLV), 138-158 (IFWG…LLML), 163-183 (IQGG…NDIA), 208-228 (GLMG…PLLT), 236-256 (LLAG…MSAI), and 273-293 (GGLL…FYFI).

The protein belongs to the CDS family.

It is found in the cell membrane. This is an uncharacterized protein from Escherichia coli (strain K12).